Reading from the N-terminus, the 37-residue chain is Large ribosomal subunit protein bL36 (37 aa).

It belongs to the bacterial ribosomal protein bL36 family.

The sequence is that of Large ribosomal subunit protein bL36 from Francisella tularensis subsp. tularensis (strain FSC 198).